The primary structure comprises 473 residues: Cysteine--tRNA ligase (473 aa).

Cys-28 contributes to the Zn(2+) binding site. Positions 30-40 (VTVYDLCHLGH) match the 'HIGH' region motif. Zn(2+) contacts are provided by Cys-213, His-238, and Glu-242. The short motif at 270–274 (KMSKS) is the 'KMSKS' region element. Lys-273 lines the ATP pocket.

This sequence belongs to the class-I aminoacyl-tRNA synthetase family. Monomer. It depends on Zn(2+) as a cofactor.

It is found in the cytoplasm. The enzyme catalyses tRNA(Cys) + L-cysteine + ATP = L-cysteinyl-tRNA(Cys) + AMP + diphosphate. The polypeptide is Cysteine--tRNA ligase (Blochmanniella pennsylvanica (strain BPEN)).